We begin with the raw amino-acid sequence, 335 residues long: Anthranilate phosphoribosyltransferase (335 aa).

Residues glycine 79, 82-83 (GD), threonine 87, 89-92 (NVST), 107-115 (KHGSRSVSS), and serine 119 each bind 5-phospho-alpha-D-ribose 1-diphosphate. Glycine 79 provides a ligand contact to anthranilate. Serine 91 provides a ligand contact to Mg(2+). Arginine 165 contributes to the anthranilate binding site. Residues aspartate 223 and glutamate 224 each coordinate Mg(2+).

The protein belongs to the anthranilate phosphoribosyltransferase family. Homodimer. Mg(2+) is required as a cofactor.

It catalyses the reaction N-(5-phospho-beta-D-ribosyl)anthranilate + diphosphate = 5-phospho-alpha-D-ribose 1-diphosphate + anthranilate. It functions in the pathway amino-acid biosynthesis; L-tryptophan biosynthesis; L-tryptophan from chorismate: step 2/5. Functionally, catalyzes the transfer of the phosphoribosyl group of 5-phosphorylribose-1-pyrophosphate (PRPP) to anthranilate to yield N-(5'-phosphoribosyl)-anthranilate (PRA). This chain is Anthranilate phosphoribosyltransferase, found in Helicobacter pylori (strain HPAG1).